Here is a 227-residue protein sequence, read N- to C-terminus: Orotate phosphoribosyltransferase 2 (227 aa).

41–42 lines the orotate pocket; it reads FF. 5-phospho-alpha-D-ribose 1-diphosphate contacts are provided by residues 79 to 80, Arg109, Lys110, Lys113, His115, and 135 to 143; these read YK and DDVMTAGTA. Orotate contacts are provided by Thr139 and Arg167.

It belongs to the purine/pyrimidine phosphoribosyltransferase family. PyrE subfamily. As to quaternary structure, homodimer.

It carries out the reaction orotidine 5'-phosphate + diphosphate = orotate + 5-phospho-alpha-D-ribose 1-diphosphate. The protein operates within pyrimidine metabolism; UMP biosynthesis via de novo pathway; UMP from orotate: step 1/2. Functionally, catalyzes the transfer of a ribosyl phosphate group from 5-phosphoribose 1-diphosphate to orotate, leading to the formation of orotidine monophosphate (OMP). The sequence is that of Orotate phosphoribosyltransferase 2 (URA10) from Saccharomyces cerevisiae (strain ATCC 204508 / S288c) (Baker's yeast).